Reading from the N-terminus, the 285-residue chain is 2-dehydro-3-deoxyphosphooctonate aldolase (285 aa).

This sequence belongs to the KdsA family.

The protein localises to the cytoplasm. It carries out the reaction D-arabinose 5-phosphate + phosphoenolpyruvate + H2O = 3-deoxy-alpha-D-manno-2-octulosonate-8-phosphate + phosphate. It functions in the pathway carbohydrate biosynthesis; 3-deoxy-D-manno-octulosonate biosynthesis; 3-deoxy-D-manno-octulosonate from D-ribulose 5-phosphate: step 2/3. It participates in bacterial outer membrane biogenesis; lipopolysaccharide biosynthesis. This chain is 2-dehydro-3-deoxyphosphooctonate aldolase, found in Verminephrobacter eiseniae (strain EF01-2).